A 42-amino-acid polypeptide reads, in one-letter code: uncharacterized protein (42 aa).

The helical transmembrane segment at 5 to 27 threads the bilayer; sequence FLHTNITIIPHSVLYVSLSYYII.

The protein localises to the membrane. This is an uncharacterized protein from Saccharomyces cerevisiae (strain ATCC 204508 / S288c) (Baker's yeast).